The sequence spans 401 residues: Elongation factor Tu, apicoplast (401 aa).

Positions 10 to 206 (KPHINIGTIG…ALDSYIPLPK (197 aa)) constitute a tr-type G domain. The tract at residues 19–26 (GHVDHGKT) is G1. 19–26 (GHVDHGKT) is a GTP binding site. A Mg(2+)-binding site is contributed by T26. Residues 60–64 (GITIK) form a G2 region. Positions 81–84 (DCPG) are G3. GTP contacts are provided by residues 81–85 (DCPGH) and 136–139 (NKID). Residues 136–139 (NKID) are G4. Residues 173-175 (SAL) form a G5 region.

It belongs to the TRAFAC class translation factor GTPase superfamily. Classic translation factor GTPase family. EF-Tu/EF-1A subfamily. In terms of assembly, monomer.

Its subcellular location is the plastid. It localises to the apicoplast. It carries out the reaction GTP + H2O = GDP + phosphate + H(+). Its function is as follows. GTP hydrolase that promotes the GTP-dependent binding of aminoacyl-tRNA to the A-site of ribosomes during protein biosynthesis. The chain is Elongation factor Tu, apicoplast (tufA) from Toxoplasma gondii.